Here is a 184-residue protein sequence, read N- to C-terminus: Peptide deformylase 2 (184 aa).

Fe cation-binding residues include cysteine 110 and histidine 153. Residue glutamate 154 is part of the active site. Fe cation is bound at residue histidine 157.

It belongs to the polypeptide deformylase family. It depends on Fe(2+) as a cofactor.

It carries out the reaction N-terminal N-formyl-L-methionyl-[peptide] + H2O = N-terminal L-methionyl-[peptide] + formate. Functionally, removes the formyl group from the N-terminal Met of newly synthesized proteins. Requires at least a dipeptide for an efficient rate of reaction. N-terminal L-methionine is a prerequisite for activity but the enzyme has broad specificity at other positions. The protein is Peptide deformylase 2 of Bacillus anthracis.